A 305-amino-acid chain; its full sequence is HTH-type transcriptional activator BauR (305 aa).

In terms of domain architecture, HTH lysR-type spans 15–72 (FDIRLLRIFKTIVECGSFSAAESTLGLSRSAISLHMGDLEKRLGMRLCQRGRAGFALT).

The protein belongs to the LysR transcriptional regulatory family.

In terms of biological role, involved in the degradation of beta-alanine. BauR activates the transcription of the bauABCD operon. This Pseudomonas aeruginosa (strain ATCC 15692 / DSM 22644 / CIP 104116 / JCM 14847 / LMG 12228 / 1C / PRS 101 / PAO1) protein is HTH-type transcriptional activator BauR (bauR).